The primary structure comprises 167 residues: Adenylylsulfate reductase subunit beta (167 aa).

2 consecutive 4Fe-4S ferredoxin-type domains span residues 1–35 and 38–67; these read MPTFVDPSKCDGCKGGEKTACMYICPNDLMILDPE and KAFNQEPEACWECYSCIKICPQGAITARPY. Cys-10, Cys-13, Cys-21, Cys-25, Cys-47, Cys-50, Cys-53, and Cys-57 together coordinate [4Fe-4S] cluster.

Heterodimer composed of AprA and AprB. The heterodimers can dimerize to form heterotetramers. The cofactor is [4Fe-4S] cluster.

The protein localises to the cytoplasm. Its function is as follows. Iron-sulfur cluster subunit of the adenylylsulfate reductase which catalyzes reversibly the reduction of adenosine 5'-phosphosulfate (APS) to sulfite and AMP during dissimilatory sulfate reduction. The iron-sulfur cluster 2 is thought to accept electrons from a still unknown electron donor and transfer electrons to the iron-sulfur cluster 1 of this protein and then onto the FAD of AprA. This Megalodesulfovibrio gigas (strain ATCC 19364 / DSM 1382 / NCIMB 9332 / VKM B-1759) (Desulfovibrio gigas) protein is Adenylylsulfate reductase subunit beta.